A 261-amino-acid polypeptide reads, in one-letter code: MQDTPLIIGSRSFQSRLLVGTGKYKDLNETDLAIQASGAEIVTVAIRRVNIGQNPDQPNLLSVIPPEKYTILPNTAGCFDADSAVRTCMLARALLDGHNLVKLEVLGDEKTLYPNVTETLKAARTLIDDGFEIMVYTSDDPIIAQELESMGCVAIMPLGSLIGSGLGILNPHTISIIKENAKVPVLVDAGVGTASDAAIAMELGCDGVLMNTAIAAAQNPILMASAMKKAVEAGREAFLAGRMPRKRMANASSPETGYFFK.

K102 functions as the Schiff-base intermediate with DXP in the catalytic mechanism. 1-deoxy-D-xylulose 5-phosphate contacts are provided by residues G163, 189–190, and 211–212; these read AG and NT.

Belongs to the ThiG family. Homotetramer. Forms heterodimers with either ThiH or ThiS.

The protein localises to the cytoplasm. It catalyses the reaction [ThiS sulfur-carrier protein]-C-terminal-Gly-aminoethanethioate + 2-iminoacetate + 1-deoxy-D-xylulose 5-phosphate = [ThiS sulfur-carrier protein]-C-terminal Gly-Gly + 2-[(2R,5Z)-2-carboxy-4-methylthiazol-5(2H)-ylidene]ethyl phosphate + 2 H2O + H(+). The protein operates within cofactor biosynthesis; thiamine diphosphate biosynthesis. Its function is as follows. Catalyzes the rearrangement of 1-deoxy-D-xylulose 5-phosphate (DXP) to produce the thiazole phosphate moiety of thiamine. Sulfur is provided by the thiocarboxylate moiety of the carrier protein ThiS. In vitro, sulfur can be provided by H(2)S. In Acinetobacter baumannii (strain SDF), this protein is Thiazole synthase.